The following is a 603-amino-acid chain: UvrABC system protein C (603 aa).

One can recognise a GIY-YIG domain in the interval 15–92 (DQPGCYLMKD…IKKHDPRFNI (78 aa)). In terms of domain architecture, UVR spans 197–232 (KTVKNDLMKKMQEAAENMEFEKAGEFRDQINAIETT).

This sequence belongs to the UvrC family. As to quaternary structure, interacts with UvrB in an incision complex.

It is found in the cytoplasm. The UvrABC repair system catalyzes the recognition and processing of DNA lesions. UvrC both incises the 5' and 3' sides of the lesion. The N-terminal half is responsible for the 3' incision and the C-terminal half is responsible for the 5' incision. In Listeria monocytogenes serovar 1/2a (strain ATCC BAA-679 / EGD-e), this protein is UvrABC system protein C.